The sequence spans 136 residues: Translation initiation factor 5A (136 aa).

Position 37 is a hypusine (Lys-37).

Belongs to the eIF-5A family.

Its subcellular location is the cytoplasm. Functionally, functions by promoting the formation of the first peptide bond. The polypeptide is Translation initiation factor 5A (eIF5A) (Thermococcus onnurineus (strain NA1)).